Here is a 465-residue protein sequence, read N- to C-terminus: Siroheme synthase (465 aa).

Positions Met-1–Leu-203 are precorrin-2 dehydrogenase /sirohydrochlorin ferrochelatase. Residues Glu-22 to Val-23 and Pro-43 to Gln-44 each bind NAD(+). Ser-128 bears the Phosphoserine mark. A uroporphyrinogen-III C-methyltransferase region spans residues Gly-217–Ala-465. Position 226 (Pro-226) interacts with S-adenosyl-L-methionine. Residue Asp-249 is the Proton acceptor of the active site. Residue Lys-271 is the Proton donor of the active site. Residues Gly-302–Asp-304, Ile-307, Thr-332–Ala-333, Met-384, and Gly-413 each bind S-adenosyl-L-methionine.

In the N-terminal section; belongs to the precorrin-2 dehydrogenase / sirohydrochlorin ferrochelatase family. This sequence in the C-terminal section; belongs to the precorrin methyltransferase family.

The catalysed reaction is uroporphyrinogen III + 2 S-adenosyl-L-methionine = precorrin-2 + 2 S-adenosyl-L-homocysteine + H(+). The enzyme catalyses precorrin-2 + NAD(+) = sirohydrochlorin + NADH + 2 H(+). It carries out the reaction siroheme + 2 H(+) = sirohydrochlorin + Fe(2+). It participates in cofactor biosynthesis; adenosylcobalamin biosynthesis; precorrin-2 from uroporphyrinogen III: step 1/1. It functions in the pathway cofactor biosynthesis; adenosylcobalamin biosynthesis; sirohydrochlorin from precorrin-2: step 1/1. Its pathway is porphyrin-containing compound metabolism; siroheme biosynthesis; precorrin-2 from uroporphyrinogen III: step 1/1. The protein operates within porphyrin-containing compound metabolism; siroheme biosynthesis; siroheme from sirohydrochlorin: step 1/1. It participates in porphyrin-containing compound metabolism; siroheme biosynthesis; sirohydrochlorin from precorrin-2: step 1/1. Multifunctional enzyme that catalyzes the SAM-dependent methylations of uroporphyrinogen III at position C-2 and C-7 to form precorrin-2 via precorrin-1. Then it catalyzes the NAD-dependent ring dehydrogenation of precorrin-2 to yield sirohydrochlorin. Finally, it catalyzes the ferrochelation of sirohydrochlorin to yield siroheme. This chain is Siroheme synthase, found in Pseudomonas aeruginosa (strain ATCC 15692 / DSM 22644 / CIP 104116 / JCM 14847 / LMG 12228 / 1C / PRS 101 / PAO1).